The primary structure comprises 308 residues: tRNA pseudouridine synthase B (308 aa).

Asp-47 functions as the Nucleophile in the catalytic mechanism.

This sequence belongs to the pseudouridine synthase TruB family. Type 1 subfamily.

It carries out the reaction uridine(55) in tRNA = pseudouridine(55) in tRNA. Responsible for synthesis of pseudouridine from uracil-55 in the psi GC loop of transfer RNAs. This Xanthomonas axonopodis pv. citri (strain 306) protein is tRNA pseudouridine synthase B.